Here is a 150-residue protein sequence, read N- to C-terminus: Sec-independent protein translocase protein TatB (150 aa).

The chain crosses the membrane as a helical span at residues 1–21 (MFDLSWSEIALVGVVALIVIG). Basic and acidic residues predominate over residues 77-86 (KIDQAIDPDG). A disordered region spans residues 77–150 (KIDQAIDPDG…RTDGSLPPQD (74 aa)). Residues 109–135 (AAPPSLPPQAPAQPVPPATGAAPPSPS) show a composition bias toward pro residues.

Belongs to the TatB family. In terms of assembly, the Tat system comprises two distinct complexes: a TatABC complex, containing multiple copies of TatA, TatB and TatC subunits, and a separate TatA complex, containing only TatA subunits. Substrates initially bind to the TatABC complex, which probably triggers association of the separate TatA complex to form the active translocon.

The protein resides in the cell inner membrane. In terms of biological role, part of the twin-arginine translocation (Tat) system that transports large folded proteins containing a characteristic twin-arginine motif in their signal peptide across membranes. Together with TatC, TatB is part of a receptor directly interacting with Tat signal peptides. TatB may form an oligomeric binding site that transiently accommodates folded Tat precursor proteins before their translocation. This Rhodospirillum rubrum (strain ATCC 11170 / ATH 1.1.1 / DSM 467 / LMG 4362 / NCIMB 8255 / S1) protein is Sec-independent protein translocase protein TatB.